The sequence spans 140 residues: Ribosome maturation factor RimP (140 aa).

Belongs to the RimP family.

It is found in the cytoplasm. Its function is as follows. Required for maturation of 30S ribosomal subunits. The protein is Ribosome maturation factor RimP of Campylobacter jejuni subsp. jejuni serotype O:2 (strain ATCC 700819 / NCTC 11168).